The sequence spans 290 residues: Type II restriction enzyme MjaIII (290 aa).

It belongs to the DpnII type II restriction endonuclease family.

The catalysed reaction is Endonucleolytic cleavage of DNA to give specific double-stranded fragments with terminal 5'-phosphates.. A P subtype restriction enzyme that recognizes the double-stranded sequence 5'-GATC-3'; the cleavage site is unknown. The chain is Type II restriction enzyme MjaIII (mjaIIIR) from Methanocaldococcus jannaschii (strain ATCC 43067 / DSM 2661 / JAL-1 / JCM 10045 / NBRC 100440) (Methanococcus jannaschii).